The sequence spans 279 residues: Large ribosomal subunit protein uL24m (279 aa).

A mitochondrion-targeting transit peptide spans 1 to 31 (MRDLRKLIPRLRGPGTNVLKMKKPLPLHMRT). Residues 34–51 (REHLNKSDPTVKDDKSAK) show a composition bias toward basic and acidic residues. The disordered stretch occupies residues 34 to 56 (REHLNKSDPTVKDDKSAKPELPF). The 31-residue stretch at 70–100 (KGDYVYVHQGPLKGKWGRVVETNKYTNGITI) folds into the KOW domain. The interval 185-204 (PRPKTEDKPKDPEGKLDTKN) is disordered. A compositionally biased stretch (basic and acidic residues) spans 187-202 (PKTEDKPKDPEGKLDT).

The protein belongs to the universal ribosomal protein uL24 family. As to quaternary structure, component of the mitochondrial large ribosomal subunit (mt-LSU). Mature yeast 74S mitochondrial ribosomes consist of a small (37S) and a large (54S) subunit. The 37S small subunit contains a 15S ribosomal RNA (15S mt-rRNA) and at least 32 different proteins. The 54S large subunit contains a 21S rRNA (21S mt-rRNA) and at least 45 different proteins. uL24m forms the wall of the exit tunnel.

The protein resides in the mitochondrion. Functionally, component of the mitochondrial ribosome (mitoribosome), a dedicated translation machinery responsible for the synthesis of mitochondrial genome-encoded proteins, including at least some of the essential transmembrane subunits of the mitochondrial respiratory chain. The mitoribosomes are attached to the mitochondrial inner membrane and translation products are cotranslationally integrated into the membrane. The chain is Large ribosomal subunit protein uL24m (mrpl40) from Schizosaccharomyces pombe (strain 972 / ATCC 24843) (Fission yeast).